Reading from the N-terminus, the 374-residue chain is MSFFTNLRRVNKVYPDSASFIVDNRLLLNTTPAGFTNVLNVPSTRNLGNGRFEPGYNLSNNQFVSAGDINRITRSNDVPRIRGVFQGISDPQIGSLNQLRRVDNVPDANLHVKRTRGDAVKQSFPETNVRSAEGVDRALQQNPRLNTYLQGAKAAGVGVLLAGGAYLTFSAATLVQDIIRALNNTGGSYYVRGSDGGETADACLLLHRTCQRDPNMNTSEVAICANDPLVSNTAQLQAICSGFNYEQEQTVCRQSDPAADPDSPQFVDVSDLLPGQTIMCIEPYSLGDLIGDLGLDHLLGEEGLVGKSSNSSDSVSNKLMPLIWLIGAVLFLALVVYLIYRFLIKGGGSSTTNAPPVVIVPPPATTNLNPQQQI.

A helical membrane pass occupies residues 155-175 (AGVGVLLAGGAYLTFSAATLV). Residue N183 is glycosylated (N-linked (GlcNAc...) asparagine; by host). A helical transmembrane segment spans residues 319–339 (LMPLIWLIGAVLFLALVVYLI). The segment at 355 to 374 (PPVVIVPPPATTNLNPQQQI) is disordered.

Belongs to the baculoviridae E56 family.

The protein localises to the virion membrane. Its function is as follows. Structural protein that is specific for occlusion-derived virus (ODV) envelopes but not of budded virus (BV). This chain is Occlusion-derived virus envelope protein E56 (ODVP6E), found in Orgyia pseudotsugata (Douglas-fir tussock moth).